A 510-amino-acid chain; its full sequence is ATP synthase subunit alpha (510 aa).

170-177 contributes to the ATP binding site; the sequence is GDRQTGKT.

It belongs to the ATPase alpha/beta chains family. F-type ATPases have 2 components, CF(1) - the catalytic core - and CF(0) - the membrane proton channel. CF(1) has five subunits: alpha(3), beta(3), gamma(1), delta(1), epsilon(1). CF(0) has three main subunits: a(1), b(2) and c(9-12). The alpha and beta chains form an alternating ring which encloses part of the gamma chain. CF(1) is attached to CF(0) by a central stalk formed by the gamma and epsilon chains, while a peripheral stalk is formed by the delta and b chains.

It is found in the cell inner membrane. The catalysed reaction is ATP + H2O + 4 H(+)(in) = ADP + phosphate + 5 H(+)(out). Produces ATP from ADP in the presence of a proton gradient across the membrane. The alpha chain is a regulatory subunit. This chain is ATP synthase subunit alpha, found in Dictyoglomus thermophilum (strain ATCC 35947 / DSM 3960 / H-6-12).